Reading from the N-terminus, the 193-residue chain is Xanthine phosphoribosyltransferase (193 aa).

Xanthine is bound by residues Leu-20 and Asn-27. A 5-phospho-alpha-D-ribose 1-diphosphate-binding site is contributed by 128–132 (ANGDA). Lys-156 contacts xanthine.

The protein belongs to the purine/pyrimidine phosphoribosyltransferase family. Xpt subfamily. Homodimer.

The protein resides in the cytoplasm. The catalysed reaction is XMP + diphosphate = xanthine + 5-phospho-alpha-D-ribose 1-diphosphate. It functions in the pathway purine metabolism; XMP biosynthesis via salvage pathway; XMP from xanthine: step 1/1. Converts the preformed base xanthine, a product of nucleic acid breakdown, to xanthosine 5'-monophosphate (XMP), so it can be reused for RNA or DNA synthesis. The polypeptide is Xanthine phosphoribosyltransferase (Staphylococcus haemolyticus (strain JCSC1435)).